A 539-amino-acid chain; its full sequence is GMP synthase [glutamine-hydrolyzing] (539 aa).

The region spanning 4 to 202 (KILILDFGSQ…VLQIAGAKPD (199 aa)) is the Glutamine amidotransferase type-1 domain. The active-site Nucleophile is Cys-81. Catalysis depends on residues His-176 and Glu-178. Residues 203–395 (WIMKNHIEEA…LGLPPEMVYR (193 aa)) enclose the GMPS ATP-PPase domain. 230 to 236 (SGGVDSS) serves as a coordination point for ATP.

In terms of assembly, homodimer.

It carries out the reaction XMP + L-glutamine + ATP + H2O = GMP + L-glutamate + AMP + diphosphate + 2 H(+). It participates in purine metabolism; GMP biosynthesis; GMP from XMP (L-Gln route): step 1/1. Catalyzes the synthesis of GMP from XMP. This chain is GMP synthase [glutamine-hydrolyzing], found in Burkholderia vietnamiensis (strain G4 / LMG 22486) (Burkholderia cepacia (strain R1808)).